We begin with the raw amino-acid sequence, 389 residues long: Equilibrative nucleotide transporter 8 (389 aa).

10 helical membrane passes run 19–39 (VAYV…NALI), 57–77 (TFTV…MTWN), 87–107 (NLGF…DWVW), 119–139 (LMVG…GSLI), 150–170 (MQAI…LRIA), 187–207 (HSYF…CNVL), 238–258 (WPAS…PGFI), 266–286 (LLQS…DFVG), 331–351 (VVVL…VLMI), and 367–387 (IFMV…GWLW).

It belongs to the SLC29A/ENT transporter (TC 2.A.57) family. Expressed in stems, flowers and siliques.

It is found in the cell membrane. In terms of biological role, may be involved in nucleoside transport. The protein is Equilibrative nucleotide transporter 8 (ETN8) of Arabidopsis thaliana (Mouse-ear cress).